The chain runs to 95 residues: UPF0358 protein GTNG_0942 (95 aa).

It belongs to the UPF0358 family.

The chain is UPF0358 protein GTNG_0942 from Geobacillus thermodenitrificans (strain NG80-2).